The primary structure comprises 235 residues: 15,16-dihydrobiliverdin:ferredoxin oxidoreductase (235 aa).

This sequence belongs to the HY2 family.

It catalyses the reaction 15,16-dihydrobiliverdin + oxidized 2[4Fe-4S]-[ferredoxin] = biliverdin IXalpha + reduced 2[4Fe-4S]-[ferredoxin] + 2 H(+). Catalyzes the two-electron reduction of biliverdin IX-alpha at the C15 methine bridge. This chain is 15,16-dihydrobiliverdin:ferredoxin oxidoreductase (pebA), found in Parasynechococcus marenigrum (strain WH8102).